Reading from the N-terminus, the 288-residue chain is Quinate/shikimate dehydrogenase (288 aa).

Residues Lys71 and Asp107 each coordinate substrate. Residues 132–135 (AGGA), 155–158 (NRRD), Lys205, 232–235 (CVYN), and Gly255 contribute to the NAD(+) site.

It belongs to the shikimate dehydrogenase family. As to quaternary structure, homodimer.

It carries out the reaction L-quinate + NAD(+) = 3-dehydroquinate + NADH + H(+). It catalyses the reaction L-quinate + NADP(+) = 3-dehydroquinate + NADPH + H(+). The catalysed reaction is shikimate + NADP(+) = 3-dehydroshikimate + NADPH + H(+). The enzyme catalyses shikimate + NAD(+) = 3-dehydroshikimate + NADH + H(+). Its pathway is metabolic intermediate biosynthesis; chorismate biosynthesis; chorismate from D-erythrose 4-phosphate and phosphoenolpyruvate: step 4/7. Its function is as follows. The actual biological function of YdiB remains unclear, nor is it known whether 3-dehydroshikimate or quinate represents the natural substrate. Catalyzes the reversible NAD-dependent reduction of both 3-dehydroshikimate (DHSA) and 3-dehydroquinate to yield shikimate (SA) and quinate, respectively. It can use both NAD or NADP for catalysis, however it has higher catalytic efficiency with NAD. This Shigella flexneri protein is Quinate/shikimate dehydrogenase.